Here is a 121-residue protein sequence, read N- to C-terminus: Prefoldin subunit beta (121 aa).

The protein belongs to the prefoldin subunit beta family. As to quaternary structure, heterohexamer of two alpha and four beta subunits.

It localises to the cytoplasm. In terms of biological role, molecular chaperone capable of stabilizing a range of proteins. Seems to fulfill an ATP-independent, HSP70-like function in archaeal de novo protein folding. The polypeptide is Prefoldin subunit beta (Methanosphaerula palustris (strain ATCC BAA-1556 / DSM 19958 / E1-9c)).